A 1290-amino-acid chain; its full sequence is DNA-directed RNA polymerase subunit beta' (1290 aa).

Positions 68, 70, 83, and 86 each coordinate Zn(2+). Residues Asp530, Asp532, and Asp534 each contribute to the Mg(2+) site. Cys909, Cys985, Cys992, and Cys995 together coordinate Zn(2+).

Belongs to the RNA polymerase beta' chain family. As to quaternary structure, the RNAP catalytic core consists of 2 alpha, 1 beta, 1 beta' and 1 omega subunit. When a sigma factor is associated with the core the holoenzyme is formed, which can initiate transcription. The cofactor is Mg(2+). Zn(2+) serves as cofactor.

The catalysed reaction is RNA(n) + a ribonucleoside 5'-triphosphate = RNA(n+1) + diphosphate. Functionally, DNA-dependent RNA polymerase catalyzes the transcription of DNA into RNA using the four ribonucleoside triphosphates as substrates. The sequence is that of DNA-directed RNA polymerase subunit beta' from Mycoplasma pneumoniae (strain ATCC 29342 / M129 / Subtype 1) (Mycoplasmoides pneumoniae).